Consider the following 403-residue polypeptide: Tyrosine--tRNA ligase (403 aa).

The 'HIGH' region motif lies at 42–51 (PTAPDLHLGH). Residues 226-230 (KMSKS) carry the 'KMSKS' region motif. Lys229 contributes to the ATP binding site. Residues 339-400 (LRLAGLLTAA…GKRNFARVLL (62 aa)) enclose the S4 RNA-binding domain.

This sequence belongs to the class-I aminoacyl-tRNA synthetase family. TyrS type 2 subfamily. In terms of assembly, homodimer.

Its subcellular location is the cytoplasm. It catalyses the reaction tRNA(Tyr) + L-tyrosine + ATP = L-tyrosyl-tRNA(Tyr) + AMP + diphosphate + H(+). Functionally, catalyzes the attachment of tyrosine to tRNA(Tyr) in a two-step reaction: tyrosine is first activated by ATP to form Tyr-AMP and then transferred to the acceptor end of tRNA(Tyr). The sequence is that of Tyrosine--tRNA ligase from Xanthomonas euvesicatoria pv. vesicatoria (strain 85-10) (Xanthomonas campestris pv. vesicatoria).